Here is a 126-residue protein sequence, read N- to C-terminus: MARIAGVDLPRNKRIEIALTYIYGIGLSRSKEILKKTNIDADIRCQNLNDQQIVSIREILESSYQIEGDLKRFESMSIKRLMEISTYRGRRHRLGLPLRGQRTRTNARTRRGGKKTVAGKKKAPRK.

The interval 97 to 126 (PLRGQRTRTNARTRRGGKKTVAGKKKAPRK) is disordered. Residues 101 to 126 (QRTRTNARTRRGGKKTVAGKKKAPRK) are compositionally biased toward basic residues.

Belongs to the universal ribosomal protein uS13 family. As to quaternary structure, part of the 30S ribosomal subunit.

It localises to the plastid. The protein localises to the chloroplast. In terms of biological role, located at the top of the head of the 30S subunit, it contacts several helices of the 16S rRNA. The chain is Small ribosomal subunit protein uS13c from Porphyra purpurea (Red seaweed).